The primary structure comprises 312 residues: Malate dehydrogenase (312 aa).

Residues 7-13 (GAAGGIG) and Asp-34 each bind NAD(+). Residues Arg-81 and Arg-87 each contribute to the substrate site. NAD(+)-binding positions include Asn-94 and 117-119 (ITN). Asn-119 and Arg-153 together coordinate substrate. The Proton acceptor role is filled by His-177. Met-227 lines the NAD(+) pocket.

The protein belongs to the LDH/MDH superfamily. MDH type 1 family. Homodimer.

It carries out the reaction (S)-malate + NAD(+) = oxaloacetate + NADH + H(+). Functionally, catalyzes the reversible oxidation of malate to oxaloacetate. The sequence is that of Malate dehydrogenase from Escherichia coli O7:K1 (strain IAI39 / ExPEC).